A 291-amino-acid chain; its full sequence is 4-hydroxy-tetrahydrodipicolinate synthase (291 aa).

Threonine 45 provides a ligand contact to pyruvate. The active-site Proton donor/acceptor is the tyrosine 131. Residue lysine 159 is the Schiff-base intermediate with substrate of the active site. Isoleucine 202 serves as a coordination point for pyruvate.

Belongs to the DapA family. As to quaternary structure, homotetramer; dimer of dimers.

It is found in the cytoplasm. The catalysed reaction is L-aspartate 4-semialdehyde + pyruvate = (2S,4S)-4-hydroxy-2,3,4,5-tetrahydrodipicolinate + H2O + H(+). The protein operates within amino-acid biosynthesis; L-lysine biosynthesis via DAP pathway; (S)-tetrahydrodipicolinate from L-aspartate: step 3/4. Catalyzes the condensation of (S)-aspartate-beta-semialdehyde [(S)-ASA] and pyruvate to 4-hydroxy-tetrahydrodipicolinate (HTPA). This chain is 4-hydroxy-tetrahydrodipicolinate synthase, found in Methanosarcina mazei (strain ATCC BAA-159 / DSM 3647 / Goe1 / Go1 / JCM 11833 / OCM 88) (Methanosarcina frisia).